A 408-amino-acid polypeptide reads, in one-letter code: Putative transporter AmpG 2 (408 aa).

Helical transmembrane passes span 10–30, 49–69, 84–104, 109–129, 154–174, 177–197, 224–244, 261–281, 294–311, 315–337, 353–373, and 378–398; these read YISNIFFILIISFPGGLIYLL, IGLFSLVNFIHIFKFLWGPLL, YCLIIALVSCICCVYILTNFN, FIPFALCLVAVAFFSSIYDML, FRIGILIAGSGALYLSTIISW, VYRSMAILCIPSLLLIIIYPL, WLIIVSFMLLYRLQDNFLSIM, LGYKAFGMCAAILGGFIGGFL, ALIYHALSSLSFLFLYFY, ITSLYIAVFFQEFTKGLTMSPFF, IALITSIAYISTILFGSISGY, and LGWTYFFLVAGFCFIPAYILI.

It belongs to the major facilitator superfamily.

Its subcellular location is the cell inner membrane. This Rickettsia felis (strain ATCC VR-1525 / URRWXCal2) (Rickettsia azadi) protein is Putative transporter AmpG 2 (ampG2).